The chain runs to 197 residues: Holliday junction branch migration complex subunit RuvA (197 aa).

The segment at Met-1–Leu-64 is domain I. The tract at residues Arg-65–Thr-143 is domain II. The flexible linker stretch occupies residues Gly-144–Leu-153. Residues Leu-153–Arg-197 form a domain III region.

This sequence belongs to the RuvA family. Homotetramer. Forms an RuvA(8)-RuvB(12)-Holliday junction (HJ) complex. HJ DNA is sandwiched between 2 RuvA tetramers; dsDNA enters through RuvA and exits via RuvB. An RuvB hexamer assembles on each DNA strand where it exits the tetramer. Each RuvB hexamer is contacted by two RuvA subunits (via domain III) on 2 adjacent RuvB subunits; this complex drives branch migration. In the full resolvosome a probable DNA-RuvA(4)-RuvB(12)-RuvC(2) complex forms which resolves the HJ.

It localises to the cytoplasm. Functionally, the RuvA-RuvB-RuvC complex processes Holliday junction (HJ) DNA during genetic recombination and DNA repair, while the RuvA-RuvB complex plays an important role in the rescue of blocked DNA replication forks via replication fork reversal (RFR). RuvA specifically binds to HJ cruciform DNA, conferring on it an open structure. The RuvB hexamer acts as an ATP-dependent pump, pulling dsDNA into and through the RuvAB complex. HJ branch migration allows RuvC to scan DNA until it finds its consensus sequence, where it cleaves and resolves the cruciform DNA. This is Holliday junction branch migration complex subunit RuvA from Stenotrophomonas maltophilia (strain R551-3).